The following is a 279-amino-acid chain: MKIELAKSYGFCFGVKRAIKIAENSKNASTIGELIHNSLEIDRLKNNFNVKTLKDISELKNEKKAIIRTHGITKEGLANLKSRDVEIIDATCPFVTKPQQIVEKMSSEGYEIVFFGDINHPEVKGVMSYSSKNVYVILDESELETVKLPSKIAVVSQTTKKIEKFTKIVSYLMQRVKEVRVFNTICNATLENQEAVRELSSRADVMVIIGGKNSSNTKQLYLISKNLCPDSYLIESENELELKWFQNKKLCGISAGASTPEWVIQNVINKLENLTHKDS.

Cys12 is a binding site for [4Fe-4S] cluster. Residues His36 and His70 each contribute to the (2E)-4-hydroxy-3-methylbut-2-enyl diphosphate site. Dimethylallyl diphosphate is bound by residues His36 and His70. Isopentenyl diphosphate-binding residues include His36 and His70. Cys92 contributes to the [4Fe-4S] cluster binding site. A (2E)-4-hydroxy-3-methylbut-2-enyl diphosphate-binding site is contributed by His120. His120 contributes to the dimethylallyl diphosphate binding site. His120 contacts isopentenyl diphosphate. Glu122 serves as the catalytic Proton donor. Thr158 is a (2E)-4-hydroxy-3-methylbut-2-enyl diphosphate binding site. Cys186 serves as a coordination point for [4Fe-4S] cluster. Residues Ser214, Ser215, Asn216, and Ser258 each contribute to the (2E)-4-hydroxy-3-methylbut-2-enyl diphosphate site. Ser214, Ser215, Asn216, and Ser258 together coordinate dimethylallyl diphosphate. Ser214, Ser215, Asn216, and Ser258 together coordinate isopentenyl diphosphate.

Belongs to the IspH family. [4Fe-4S] cluster serves as cofactor.

The catalysed reaction is isopentenyl diphosphate + 2 oxidized [2Fe-2S]-[ferredoxin] + H2O = (2E)-4-hydroxy-3-methylbut-2-enyl diphosphate + 2 reduced [2Fe-2S]-[ferredoxin] + 2 H(+). The enzyme catalyses dimethylallyl diphosphate + 2 oxidized [2Fe-2S]-[ferredoxin] + H2O = (2E)-4-hydroxy-3-methylbut-2-enyl diphosphate + 2 reduced [2Fe-2S]-[ferredoxin] + 2 H(+). It functions in the pathway isoprenoid biosynthesis; dimethylallyl diphosphate biosynthesis; dimethylallyl diphosphate from (2E)-4-hydroxy-3-methylbutenyl diphosphate: step 1/1. Its pathway is isoprenoid biosynthesis; isopentenyl diphosphate biosynthesis via DXP pathway; isopentenyl diphosphate from 1-deoxy-D-xylulose 5-phosphate: step 6/6. Its function is as follows. Catalyzes the conversion of 1-hydroxy-2-methyl-2-(E)-butenyl 4-diphosphate (HMBPP) into a mixture of isopentenyl diphosphate (IPP) and dimethylallyl diphosphate (DMAPP). Acts in the terminal step of the DOXP/MEP pathway for isoprenoid precursor biosynthesis. This chain is 4-hydroxy-3-methylbut-2-enyl diphosphate reductase, found in Campylobacter fetus subsp. fetus (strain 82-40).